Reading from the N-terminus, the 382-residue chain is uncharacterized protein (382 aa).

12 consecutive transmembrane segments (helical) span residues 14-34 (GLLLLTLAIAVLNTLVPLWLA), 45-65 (VVSSSYFTGNLVGTLLTGYVI), 75-95 (YLASFIFAAGCAGLGLMIGFW), 102-122 (FVAGVGCAMIWVVVESALMCS), 131-151 (LLAAYMMVYYVGTFLGQLLVS), 157-177 (LMSVLPWVTGLTLAGILPLLF), 206-226 (VNGCIISGIVLGSLYGLMPLF), 235-255 (ASIGFWMAVLVSAGILGQWPI), 270-290 (VQVFVVILGSIAMLSQAAMAP), 291-311 (ALFILGAAGFTLYPVAMAWAC), 325-345 (ALLLSYTVGSLLGPSFTAMLM), and 348-368 (FSDNLLFIMIASVSFIYLLML).

It belongs to the major facilitator superfamily. YcaD (TC 2.A.1.26) family.

It localises to the cell inner membrane. This is an uncharacterized protein from Escherichia coli O17:K52:H18 (strain UMN026 / ExPEC).